The sequence spans 536 residues: MKFFTTGLLATAALAAAQEQQVLQAEDGMGRAPLPDSSIFDETLQKFQSSLEDGISHFWSEMKTNFKDYLPLISLPKKHTRRPDSEWDHVVRGADIESVWVQGADGEKRREIDGKLHNYDLRVKAVDPGVKQYSGYLDDNDADKHLFYWFFESRNDPKNDPVVLWLNGGPGCSSLTGLFLELGPATIDKNLKVVSNPYSWNSNASVIFLDQPVNVGFSYSGSSVSDTVAAGKDVYALLTLFFKQFPEYATQDFHISGESYAGHYIPVFAAEILSHKNTNINLKSALIGNGLTDPLTQYPQYRPMACGEGGYPAVLDQGTCRSMDNSLERCLSLIETCYSSESAWVCVPAAMYCNSAILAPYQQTGMNPYDVRTKCEDMASLCYPQLNAITEWLNQKPVMQALGVEVESYESCNSGINRDFLFHGDWMKPYHRLVPSVLEKIPVLIYAGDADFICNWLGNKAWTEALEWPGHKKFAETKLEDLKIVDNKNKGKKIGQVKSSGNFTFMRIFGAGHMVPLNQPEASLEFLNRWLRGEWH.

A signal peptide spans 1–17; sequence MKFFTTGLLATAALAAA. Residues 18–124 constitute a propeptide that is removed on maturation; that stretch reads QEQQVLQAED…KLHNYDLRVK (107 aa). Intrachain disulfides connect Cys172–Cys412, Cys306–Cys320, Cys330–Cys353, Cys337–Cys346, and Cys375–Cys382. Asn203 is a glycosylation site (N-linked (GlcNAc...) asparagine). Residue Ser259 is part of the active site. Residue Asp451 is part of the active site. A glycan (N-linked (GlcNAc...) asparagine) is linked at Asn502. Residue His513 is part of the active site.

Belongs to the peptidase S10 family.

Its subcellular location is the vacuole. It catalyses the reaction Release of a C-terminal amino acid with broad specificity.. Its function is as follows. Vacuolar carboxypeptidase involved in degradation of small peptides. Digests preferentially peptides containing an aliphatic or hydrophobic residue in P1' position, as well as methionine, leucine or phenylalanine in P1 position of ester substrate. This is Carboxypeptidase Y homolog A (cpyA) from Trichophyton rubrum (Athlete's foot fungus).